The sequence spans 87 residues: Small ribosomal subunit protein uS17 (87 aa).

It belongs to the universal ribosomal protein uS17 family. In terms of assembly, part of the 30S ribosomal subunit.

In terms of biological role, one of the primary rRNA binding proteins, it binds specifically to the 5'-end of 16S ribosomal RNA. This chain is Small ribosomal subunit protein uS17, found in Bacillus thuringiensis (strain Al Hakam).